Here is a 54-residue protein sequence, read N- to C-terminus: Ovomucoid (54 aa).

One can recognise a Kazal-like domain in the interval Val4–Cys54. 3 disulfide bridges follow: Cys6-Cys36, Cys14-Cys33, and Cys22-Cys54. Asn43 carries N-linked (GlcNAc...) asparagine glycosylation.

It is found in the secreted. This Cereopsis novaehollandiae (Cape Barren goose) protein is Ovomucoid.